The sequence spans 363 residues: DNA repair protein rlp1 (363 aa).

It belongs to the RecA family. RAD51 subfamily. In terms of assembly, interacts with rdl1 and sws1.

The protein resides in the cytoplasm. It is found in the nucleus. In terms of biological role, required for normal levels of meiotic recombination. Acts in the recombinational pathway of double-strand break (DSB) repair together with rhp51, rhp55 and rad22. Required for the full extent of DNA recombination and cell survival under condition of a replication fork collapse. The sequence is that of DNA repair protein rlp1 from Schizosaccharomyces pombe (strain 972 / ATCC 24843) (Fission yeast).